Reading from the N-terminus, the 360-residue chain is Phospho-N-acetylmuramoyl-pentapeptide-transferase (360 aa).

10 helical membrane-spanning segments follow: residues 27–47 (GALI…ISSL), 70–90 (GTPT…SILW), 93–113 (LSSV…AIGF), 134–154 (LALE…AGQE), 168–188 (LLLN…VGAG), 205–225 (VMVA…AIFA), 239–259 (LSVI…FNAP), 262–282 (AIFM…TVAV), 288–308 (IVLA…IIQV), and 337–357 (QVVI…LSTL).

It belongs to the glycosyltransferase 4 family. MraY subfamily. Requires Mg(2+) as cofactor.

It localises to the cell inner membrane. The enzyme catalyses UDP-N-acetyl-alpha-D-muramoyl-L-alanyl-gamma-D-glutamyl-meso-2,6-diaminopimeloyl-D-alanyl-D-alanine + di-trans,octa-cis-undecaprenyl phosphate = di-trans,octa-cis-undecaprenyl diphospho-N-acetyl-alpha-D-muramoyl-L-alanyl-D-glutamyl-meso-2,6-diaminopimeloyl-D-alanyl-D-alanine + UMP. It functions in the pathway cell wall biogenesis; peptidoglycan biosynthesis. Functionally, catalyzes the initial step of the lipid cycle reactions in the biosynthesis of the cell wall peptidoglycan: transfers peptidoglycan precursor phospho-MurNAc-pentapeptide from UDP-MurNAc-pentapeptide onto the lipid carrier undecaprenyl phosphate, yielding undecaprenyl-pyrophosphoryl-MurNAc-pentapeptide, known as lipid I. This is Phospho-N-acetylmuramoyl-pentapeptide-transferase from Chelativorans sp. (strain BNC1).